The primary structure comprises 169 residues: Anaerobic nitrite reductase NSHB3 (169 aa).

Residues 15–165 (RFTEEQEALV…LVAAIKQGMK (151 aa)) form the Globin domain. A Homodimerization motif is present at residues 48 to 52 (EVAPS). 6 residues coordinate heme b: serine 58, lysine 72, histidine 76, arginine 106, threonine 110, and histidine 111. A Homodimerization motif is present at residues 118–130 (DAHFEVAKFALLE).

The protein belongs to the plant globin family. As to quaternary structure, homodimer. The cofactor is heme b.

Its subcellular location is the cytoplasm. The protein resides in the nucleus. The enzyme catalyses Fe(III)-heme b-[protein] + nitric oxide + H2O = Fe(II)-heme b-[protein] + nitrite + 2 H(+). Phytoglobin that reduces nitrite to nitric oxide under anoxic conditions (e.g. during flooding or in waterlogged soil). May not function as an oxygen storage or transport protein. Has an unusually high affinity for O(2) through an hexacoordinate heme iron because of a very low dissociation constant. This is Anaerobic nitrite reductase NSHB3 from Oryza sativa subsp. indica (Rice).